The primary structure comprises 278 residues: HTH-type transcriptional activator RhaS (278 aa).

The HTH araC/xylS-type domain occupies 174–272 (NLLLAWLEDH…NWSPRDIRQG (99 aa)). 2 consecutive DNA-binding regions (H-T-H motif) follow at residues 191 to 212 (DAVA…KQQT) and 239 to 262 (VTDI…RREF).

In terms of assembly, binds DNA as a dimer.

The protein localises to the cytoplasm. Its function is as follows. Activates expression of the rhaBAD and rhaT operons. This is HTH-type transcriptional activator RhaS from Escherichia coli O157:H7.